The following is a 248-amino-acid chain: Tyrosine recombinase XerD-like (248 aa).

A Core-binding (CB) domain is found at 1–72; that stretch reads MKSYIEPFIA…TANQFLYYLY (72 aa). The region spanning 85-248 is the Tyr recombinase domain; the sequence is DTMKVMRTEK…PVTLEKYYKS (164 aa). Residues Lys-149 and Arg-213 contribute to the active site. The active-site O-(3'-phospho-DNA)-tyrosine intermediate is the Tyr-245.

Belongs to the 'phage' integrase family. XerD-like subfamily.

The protein localises to the cytoplasm. Its function is as follows. Putative tyrosine recombinase. Not involved in the cutting and rejoining of the recombining DNA molecules on dif(SL) site. In Streptococcus pyogenes serotype M4 (strain MGAS10750), this protein is Tyrosine recombinase XerD-like.